The sequence spans 571 residues: Membrane protein insertase YidC (571 aa).

The helical transmembrane segment at 4 to 24 threads the bilayer; the sequence is TRVFLIFAWLMVAVLLWMEWS. Positions 29-78 are disordered; the sequence is APTPAPTTTSAPAAAQSVPGANPGAIPSAQVPGAPGQAAAQAQASATPAS. Composition is skewed to low complexity over residues 34-43 and 55-78; these read PTTTSAPAAA and PSAQ…TPAS. 4 helical membrane passes run 369–389, 440–460, 483–503, and 518–538; these read LVGN…LVLY, GGCL…WVLV, YFIL…LTPA, and PLVF…YWVV.

Belongs to the OXA1/ALB3/YidC family. Type 1 subfamily. As to quaternary structure, interacts with the Sec translocase complex via SecD. Specifically interacts with transmembrane segments of nascent integral membrane proteins during membrane integration.

Its subcellular location is the cell inner membrane. Its function is as follows. Required for the insertion and/or proper folding and/or complex formation of integral membrane proteins into the membrane. Involved in integration of membrane proteins that insert both dependently and independently of the Sec translocase complex, as well as at least some lipoproteins. Aids folding of multispanning membrane proteins. This Stenotrophomonas maltophilia (strain K279a) protein is Membrane protein insertase YidC.